The following is a 178-amino-acid chain: Nascent polypeptide-associated complex subunit alpha (178 aa).

Residues 16 to 80 enclose the NAC-A/B domain; sequence PKNEKKAREL…AKVDDMNQRI (65 aa). Residues 82–100 show a composition bias toward low complexity; that stretch reads EAQAQQAQQEALQKAAADA. Residues 82–145 form a disordered region; it reads EAQAQQAQQE…DETGLDPKDI (64 aa). Residues 101–126 are compositionally biased toward basic and acidic residues; sequence GKTEDKSPEAITADLEKASLGDKKAE. A compositionally biased stretch (acidic residues) spans 127–139; it reads DEEEDEGEIDETG. Positions 140–178 constitute a UBA domain; the sequence is LDPKDIEIVVEQTQVSRAKAVKALRNHDGDMVNAIMDLS.

It belongs to the NAC-alpha family. As to quaternary structure, part of the nascent polypeptide-associated complex (NAC), consisting of EGD2 and EGD1. NAC associates with ribosomes via EGD1.

The protein resides in the cytoplasm. The protein localises to the nucleus. Its function is as follows. Component of the nascent polypeptide-associated complex (NAC), a dynamic component of the ribosomal exit tunnel, protecting the emerging polypeptides from interaction with other cytoplasmic proteins to ensure appropriate nascent protein targeting. The NAC complex also promotes mitochondrial protein import by enhancing productive ribosome interactions with the outer mitochondrial membrane and blocks the inappropriate interaction of ribosomes translating non-secretory nascent polypeptides with translocation sites in the membrane of the endoplasmic reticulum. EGD2 may also be involved in transcription regulation. The chain is Nascent polypeptide-associated complex subunit alpha (EGD2) from Candida albicans (strain SC5314 / ATCC MYA-2876) (Yeast).